A 607-amino-acid chain; its full sequence is Serum albumin (607 aa).

The signal sequence occupies residues 1–16 (MKWTILTALLIISAES). The propeptide occupies 17 to 20 (KNLY). Albumin domains lie at 19–209 (LYKR…TQLK), 210–401 (KALH…HVLA), and 403–600 (AIKE…ILIE). A Cu cation-binding site is contributed by His27. 17 disulfides stabilise this stretch: Cys77-Cys86, Cys99-Cys115, Cys114-Cys125, Cys147-Cys192, Cys191-Cys200, Cys223-Cys269, Cys268-Cys276, Cys288-Cys302, Cys301-Cys312, Cys339-Cys384, Cys383-Cys392, Cys415-Cys461, Cys460-Cys471, Cys484-Cys500, Cys499-Cys510, Cys537-Cys582, and Cys581-Cys590. His270 and Asp272 together coordinate Zn(2+). Residues Asp272 and Glu275 each contribute to the Ca(2+) site.

This sequence belongs to the ALB/AFP/VDB family. In terms of tissue distribution, plasma. In the skin, widely distributed around the membranes of epithelial layer cells and within the stratum spongiosum of the dermis (at protein level).

The protein resides in the secreted. Its function is as follows. Serum albumin, the main protein of plasma, has a good binding capacity for water, Ca(2+), Na(+), K(+), fatty acids, hormones, bilirubin and drugs. Its main function is the regulation of the colloidal osmotic pressure of blood. Potent inhibitor of trypsin but has no inhibitory effect on thrombin, chymotrypsin, elastase and subtilisin. The protein is Serum albumin of Bombina maxima (Giant fire-bellied toad).